The sequence spans 378 residues: Rhodopsin (378 aa).

The Extracellular segment spans residues 1 to 53 (MMSIASGPSHAAYTWASQGGGFGNQTVVDKVPPEMLHMVDAHWYQFPPMNPLW). N-linked (GlcNAc...) asparagine glycosylation occurs at N24. A helical membrane pass occupies residues 54–78 (HALLGFVIGVLGVISVIGNGMVIYI). At 79 to 90 (FTTTKSLRTPSN) the chain is on the cytoplasmic side. A helical transmembrane segment spans residues 91-115 (LLVVNLAISDFLMMLCMSPAMVINC). The Extracellular segment spans residues 116 to 130 (YYETWVLGPLFCELY). Residues C127 and C204 are joined by a disulfide bond. Residues 131 to 150 (GLAGSLFGCASIWTMTMIAF) form a helical membrane-spanning segment. Topologically, residues 151 to 169 (DRYNVIVKGLSAKPMTING) are cytoplasmic. The helical transmembrane segment at 170–193 (ALIRILTIWFFTLAWTIAPMFGWN) threads the bilayer. Over 194–217 (RYVPEGNMTACGTDYLTKDLFSRS) the chain is Extracellular. N200 carries N-linked (GlcNAc...) asparagine glycosylation. A helical membrane pass occupies residues 218–245 (YILIYSIFVYFTPLFLIIYSYFFIIQAV). The Cytoplasmic segment spans residues 246-280 (AAHEKNMREQAKKMNVASLRSAENQSTSAECKLAK). A helical membrane pass occupies residues 281 to 304 (VALMTISLWFMAWTPYLVINYSGI). Residues 305 to 311 (FETTKIS) are Extracellular-facing. Residues 312–336 (PLFTIWGSLFAKANAVYNPIVYGIS) form a helical membrane-spanning segment. K323 carries the post-translational modification N6-(retinylidene)lysine. Topologically, residues 337-378 (HPKYRAALFQKFPSLACTTEPTGADTMSTTTTVTEGNEKPAA) are cytoplasmic.

The protein belongs to the G-protein coupled receptor 1 family. Opsin subfamily. Post-translationally, phosphorylated on some or all of the serine and threonine residues present in the C-terminal region.

The protein localises to the membrane. Functionally, visual pigments are the light-absorbing molecules that mediate vision. They consist of an apoprotein, opsin, covalently linked to cis-retinal. This Camponotus atriceps (Florida carpenter ant) protein is Rhodopsin.